We begin with the raw amino-acid sequence, 599 residues long: MTDLAHIRNFSIVAHIDHGKSTLADRLIQETGTVQDRDMKEQLLDAMDIERERGITIKANTVRIDYTADDGQAYVLNLIDTPGHVDFAYEVSRSMRAVEGSLLVVDSTQGVEAQTLANVYQAIDADHEIVPILNKIDLPASECDRVAEQIEDVIGIDASGAIRVSAKTGVGIHETLEAIVKHLPAPKGTRDAPLKAMLVDSWYDSYLGVIVLVRIMDGVLKKGMRVKFMSNGTLHHVDRIGVFRPAMQMIDSLGPGEIGFLTASIKQVRDTRVGDTITNDRNGTEVALPGFKPAQPVVFCGLFPVDSAEFEDLRDAIEKLALNDASFSYEMETSAALGFGFRCGFLGLLHLEVIRDRLEREYDIELITTAPSVVYHVFMKDGEMRELHNPADMPDLSKVDHIEEPRIKATILVPDEYLGDVLKLCQDRRGIQQDLSYAGSRAMVVYDLPLNEVVFDFYDRLKSVTKGYASFDYQLTGYREDSLVKMSILVNDEPVDALSTMVHRDRAEARGRAMCEKLKDLIPRHMFKIPIQAAIGGKVIARETLSALRKDVTAKCYGGDATRKRKLLDKQKAGKKKMRQFGKVDIPQEAFISALKMDS.

In terms of domain architecture, tr-type G spans 5 to 187; that stretch reads AHIRNFSIVA…AIVKHLPAPK (183 aa). Residues 17 to 22 and 134 to 137 contribute to the GTP site; these read DHGKST and NKID.

The protein belongs to the TRAFAC class translation factor GTPase superfamily. Classic translation factor GTPase family. LepA subfamily.

The protein resides in the cell inner membrane. It catalyses the reaction GTP + H2O = GDP + phosphate + H(+). Functionally, required for accurate and efficient protein synthesis under certain stress conditions. May act as a fidelity factor of the translation reaction, by catalyzing a one-codon backward translocation of tRNAs on improperly translocated ribosomes. Back-translocation proceeds from a post-translocation (POST) complex to a pre-translocation (PRE) complex, thus giving elongation factor G a second chance to translocate the tRNAs correctly. Binds to ribosomes in a GTP-dependent manner. This chain is Elongation factor 4, found in Ruegeria pomeroyi (strain ATCC 700808 / DSM 15171 / DSS-3) (Silicibacter pomeroyi).